The primary structure comprises 115 residues: Anamorsin homolog 2 (115 aa).

Positions 30–115 (VKEATKGEDC…KVKLNLTDDI (86 aa)) are disordered. [2Fe-2S] cluster is bound by residues Cys-39, Cys-46, Cys-49, and Cys-51. A fe-S binding site A region spans residues 39 to 51 (CTTRRRACKNCTC). [4Fe-4S] cluster is bound by residues Cys-77, Cys-80, Cys-88, and Cys-91. Short sequence motifs (cx2C motif) lie at residues 77-80 (CGNC) and 88-91 (CATC). A fe-S binding site B region spans residues 77-91 (CGNCAKGDAFRCATC).

It belongs to the anamorsin family. In terms of assembly, monomer. It depends on [2Fe-2S] cluster as a cofactor. The cofactor is [4Fe-4S] cluster.

The protein resides in the cytoplasm. Its subcellular location is the mitochondrion intermembrane space. In terms of biological role, component of the cytosolic iron-sulfur (Fe-S) protein assembly (CIA) machinery. Required for the maturation of extramitochondrial Fe-S proteins. Part of an electron transfer chain functioning in an early step of cytosolic Fe-S biogenesis, facilitating the de novo assembly of a [4Fe-4S] cluster on the cytosolic Fe-S scaffold complex. Electrons are transferred from NADPH via a FAD- and FMN-containing diflavin oxidoreductase. Together with the diflavin oxidoreductase, also required for the assembly of the diferric tyrosyl radical cofactor of ribonucleotide reductase (RNR), probably by providing electrons for reduction during radical cofactor maturation in the catalytic small subunit. This Trypanosoma cruzi (strain CL Brener) protein is Anamorsin homolog 2.